The sequence spans 364 residues: Aminomethyltransferase (364 aa).

The protein belongs to the GcvT family. The glycine cleavage system is composed of four proteins: P, T, L and H.

It catalyses the reaction N(6)-[(R)-S(8)-aminomethyldihydrolipoyl]-L-lysyl-[protein] + (6S)-5,6,7,8-tetrahydrofolate = N(6)-[(R)-dihydrolipoyl]-L-lysyl-[protein] + (6R)-5,10-methylene-5,6,7,8-tetrahydrofolate + NH4(+). Functionally, the glycine cleavage system catalyzes the degradation of glycine. This chain is Aminomethyltransferase, found in Desulforamulus reducens (strain ATCC BAA-1160 / DSM 100696 / MI-1) (Desulfotomaculum reducens).